A 35-amino-acid chain; its full sequence is Conotoxin Cal6.1f (35 aa).

Residues 1 to 8 (GLIRPSKR) constitute a propeptide that is removed on maturation. 3 disulfide bridges follow: Cys-9-Cys-25, Cys-16-Cys-29, and Cys-24-Cys-34.

Belongs to the conotoxin O1 superfamily. As to expression, expressed by the venom duct.

It is found in the secreted. Functionally, probable neurotoxin with unknown target. Possibly targets ion channels. This chain is Conotoxin Cal6.1f, found in Californiconus californicus (California cone).